The primary structure comprises 1137 residues: AP-4 complex subunit epsilon-1 (1137 aa).

A phosphoserine mark is found at Ser700 and Ser857. Residues 727-1137 are interaction with TEPSIN; it reads SGALPVPQES…YQCQKVMEGS (411 aa).

This sequence belongs to the adaptor complexes large subunit family. In terms of assembly, adaptor protein complex 4 (AP-4) is a heterotetramer composed of two large adaptins (epsilon-type subunit AP4E1 and beta-type subunit AP4B1), a medium adaptin (mu-type subunit AP4M1) and a small adaptin (sigma-type AP4S1). Interacts with TEPSIN. Interacts with GRIA2; probably indirect it mediates the somatodendritic localization of GRIA2 in neurons. Widely expressed.

It is found in the golgi apparatus. Its subcellular location is the trans-Golgi network membrane. Its function is as follows. Component of the adaptor protein complex 4 (AP-4). Adaptor protein complexes are vesicle coat components involved both in vesicle formation and cargo selection. They control the vesicular transport of proteins in different trafficking pathways. AP-4 forms a non clathrin-associated coat on vesicles departing the trans-Golgi network (TGN) and may be involved in the targeting of proteins from the trans-Golgi network (TGN) to the endosomal-lysosomal system. It is also involved in protein sorting to the basolateral membrane in epithelial cells and the proper asymmetric localization of somatodendritic proteins in neurons. AP-4 is involved in the recognition and binding of tyrosine-based sorting signals found in the cytoplasmic part of cargos, but may also recognize other types of sorting signal. The polypeptide is AP-4 complex subunit epsilon-1 (Homo sapiens (Human)).